The primary structure comprises 185 residues: piRNA-mediated silencing protein C19orf84 homolog (185 aa).

2 disordered regions span residues 1–38 (MDELEDGALSNGDNLSLPSAGTESWPTSATPGLPPSLL) and 93–185 (HIWP…EADY). Residues 11–25 (NGDNLSLPSAGTESW) are compositionally biased toward polar residues. A compositionally biased stretch (low complexity) spans 26-38 (PTSATPGLPPSLL). The segment covering 118–130 (RPSRGWGRGRGRG) has biased composition (basic residues). Residues 139–150 (GPERAEERERNM) show a composition bias toward basic and acidic residues.

In terms of assembly, interacts with SPOCD1.

Its subcellular location is the nucleus. It localises to the nucleoplasm. In terms of biological role, protein adapter involved in piRNA-directed transposon methylation by connecting PIWIL4-piRNA and DNA methylation machineries. The PIWIL4-piRNA pathway plays a central role during spermatogenesis by directing transposon DNA methylation and silencing, thereby preventing their mobilization, which is essential for the germline integrity. This Mus musculus (Mouse) protein is piRNA-mediated silencing protein C19orf84 homolog.